The chain runs to 396 residues: Cathepsin E (396 aa).

A signal peptide spans 1-19; sequence MKTLPLLLLLLLDLGQAQG. Residues 20–53 constitute a propeptide, activation peptide; that stretch reads TLDRVPLRRQPSLRKKLRAQGQLSEFWKAHKVDM. In terms of domain architecture, Peptidase A1 spans 78-392; the sequence is YFGTISIGSP…DRGSNRVGLA (315 aa). N90 is a glycosylation site (N-linked (GlcNAc...) asparagine). D96 is a catalytic residue. 2 disulfide bridges follow: C109–C114 and C272–C276. D281 is a catalytic residue. Residues C314 and C351 are joined by a disulfide bond.

It belongs to the peptidase A1 family. Homodimer; disulfide-linked. Post-translationally, glycosylated. The nature of the carbohydrate chain varies between cell types.

Its subcellular location is the endosome. The catalysed reaction is Similar to cathepsin D, but slightly broader specificity.. Its function is as follows. May have a role in immune function. Probably involved in the processing of antigenic peptides during MHC class II-mediated antigen presentation. May play a role in activation-induced lymphocyte depletion in the thymus, and in neuronal degeneration and glial cell activation in the brain. This chain is Cathepsin E (CTSE), found in Oryctolagus cuniculus (Rabbit).